The chain runs to 261 residues: Carnitinyl-CoA dehydratase (261 aa).

The Nucleophile role is filled by E111. The active-site Proton acceptor is the E131.

The protein belongs to the enoyl-CoA hydratase/isomerase family.

The catalysed reaction is (R)-carnitinyl-CoA = crotonobetainyl-CoA + H2O. It participates in amine and polyamine metabolism; carnitine metabolism. Its function is as follows. Catalyzes the reversible dehydration of L-carnitinyl-CoA to crotonobetainyl-CoA. The protein is Carnitinyl-CoA dehydratase of Escherichia coli (strain SMS-3-5 / SECEC).